Here is a 143-residue protein sequence, read N- to C-terminus: Mini-ribonuclease 3 (143 aa).

Asp23 is an active-site residue.

Belongs to the MrnC RNase family. In terms of assembly, homodimer. The cofactor is Mg(2+).

Its subcellular location is the cytoplasm. Its function is as follows. Involved in correct processing of both the 5' and 3' ends of 23S rRNA precursor. Processes 30S rRNA precursor transcript even in absence of ribonuclease 3 (Rnc); Rnc processes 30S rRNA into smaller rRNA precursors. Cleaves more efficiently on assembled 50S ribosomal subunits. Cleavage is strongly stimulated by ribosomal protein L3 (RplC); 20-30% DMSO can replace RplC, suggesting RplC may alter rRNA conformation. The polypeptide is Mini-ribonuclease 3 (mrnC) (Bacillus subtilis (strain 168)).